The sequence spans 344 residues: Fructose-bisphosphate aldolase (344 aa).

Residue Ser53 participates in D-glyceraldehyde 3-phosphate binding. The Proton donor role is filled by Asp95. Zn(2+)-binding residues include His96, Asp131, Glu161, and His212. Gly213 is a dihydroxyacetone phosphate binding site. His252 is a Zn(2+) binding site. Dihydroxyacetone phosphate contacts are provided by residues 253–255 (GGS) and 274–277 (NVDT).

This sequence belongs to the class II fructose-bisphosphate aldolase family. The cofactor is Zn(2+).

The catalysed reaction is beta-D-fructose 1,6-bisphosphate = D-glyceraldehyde 3-phosphate + dihydroxyacetone phosphate. It participates in carbohydrate degradation; glycolysis; D-glyceraldehyde 3-phosphate and glycerone phosphate from D-glucose: step 4/4. Its function is as follows. Catalyzes the aldol condensation of dihydroxyacetone phosphate (DHAP or glycerone-phosphate) with glyceraldehyde 3-phosphate (G3P) to form fructose 1,6-bisphosphate (FBP) in gluconeogenesis and the reverse reaction in glycolysis. This is Fructose-bisphosphate aldolase (fba) from Mycobacterium bovis (strain ATCC BAA-935 / AF2122/97).